We begin with the raw amino-acid sequence, 138 residues long: Larval cuticle protein 1 (138 aa).

Positions 1 to 16 (MFKFVMVFAVLGVAAA) are cleaved as a signal peptide. The Chitin-binding type R&amp;R domain maps to 49 to 110 (ADGFDADLLV…PVGAVLPTPP (62 aa)).

Functionally, component of the larval cuticle. This Drosophila miranda (Fruit fly) protein is Larval cuticle protein 1 (Lcp1).